A 228-amino-acid chain; its full sequence is Cytochrome c oxidase subunit 2 (228 aa).

At Met1 to Ser14 the chain is on the mitochondrial intermembrane side. A helical membrane pass occupies residues Pro15–Met45. At Leu46–Gln58 the chain is on the mitochondrial matrix side. A helical membrane pass occupies residues Glu59–Met86. The Mitochondrial intermembrane segment spans residues Asp87–Ser228. Cu cation-binding residues include His160, Cys195, Glu197, Cys199, His203, and Met206. Glu197 contacts Mg(2+).

The protein belongs to the cytochrome c oxidase subunit 2 family. As to quaternary structure, component of the cytochrome c oxidase (complex IV, CIV), a multisubunit enzyme composed of 14 subunits. The complex is composed of a catalytic core of 3 subunits MT-CO1, MT-CO2 and MT-CO3, encoded in the mitochondrial DNA, and 11 supernumerary subunits COX4I, COX5A, COX5B, COX6A, COX6B, COX6C, COX7A, COX7B, COX7C, COX8 and NDUFA4, which are encoded in the nuclear genome. The complex exists as a monomer or a dimer and forms supercomplexes (SCs) in the inner mitochondrial membrane with NADH-ubiquinone oxidoreductase (complex I, CI) and ubiquinol-cytochrome c oxidoreductase (cytochrome b-c1 complex, complex III, CIII), resulting in different assemblies (supercomplex SCI(1)III(2)IV(1) and megacomplex MCI(2)III(2)IV(2)). Found in a complex with TMEM177, COA6, COX18, COX20, SCO1 and SCO2. Interacts with TMEM177 in a COX20-dependent manner. Interacts with COX20. Interacts with COX16. Cu cation is required as a cofactor.

It localises to the mitochondrion inner membrane. The enzyme catalyses 4 Fe(II)-[cytochrome c] + O2 + 8 H(+)(in) = 4 Fe(III)-[cytochrome c] + 2 H2O + 4 H(+)(out). Functionally, component of the cytochrome c oxidase, the last enzyme in the mitochondrial electron transport chain which drives oxidative phosphorylation. The respiratory chain contains 3 multisubunit complexes succinate dehydrogenase (complex II, CII), ubiquinol-cytochrome c oxidoreductase (cytochrome b-c1 complex, complex III, CIII) and cytochrome c oxidase (complex IV, CIV), that cooperate to transfer electrons derived from NADH and succinate to molecular oxygen, creating an electrochemical gradient over the inner membrane that drives transmembrane transport and the ATP synthase. Cytochrome c oxidase is the component of the respiratory chain that catalyzes the reduction of oxygen to water. Electrons originating from reduced cytochrome c in the intermembrane space (IMS) are transferred via the dinuclear copper A center (CU(A)) of subunit 2 and heme A of subunit 1 to the active site in subunit 1, a binuclear center (BNC) formed by heme A3 and copper B (CU(B)). The BNC reduces molecular oxygen to 2 water molecules using 4 electrons from cytochrome c in the IMS and 4 protons from the mitochondrial matrix. This Cairina moschata (Muscovy duck) protein is Cytochrome c oxidase subunit 2 (MT-CO2).